We begin with the raw amino-acid sequence, 265 residues long: Undecaprenyl-diphosphatase (265 aa).

The next 7 helical transmembrane spans lie at Ile41–Phe61, Leu75–Ile95, Tyr104–Ile124, Leu137–Val157, Tyr180–Thr200, Gly215–Leu235, and Tyr244–Ile264.

This sequence belongs to the UppP family.

It is found in the cell membrane. It catalyses the reaction di-trans,octa-cis-undecaprenyl diphosphate + H2O = di-trans,octa-cis-undecaprenyl phosphate + phosphate + H(+). Catalyzes the dephosphorylation of undecaprenyl diphosphate (UPP). The sequence is that of Undecaprenyl-diphosphatase from Saccharolobus islandicus (strain Y.N.15.51 / Yellowstone #2) (Sulfolobus islandicus).